Consider the following 630-residue polypeptide: Sodium-dependent serotonin transporter (630 aa).

The Cytoplasmic segment spans residues 1–87 (METTPLNSQK…ERETWGKKMD (87 aa)). Positions 23–60 (ENGVLQKGVPTTADRAEPSQISNGYSAVPSTSAGDEAS) are disordered. Positions 41-55 (SQISNGYSAVPSTSA) are enriched in polar residues. Residue Tyr-47 is modified to Phosphotyrosine. Residues 88–112 (FLLSVIGYAVDLGNIWRFPYICYQN) traverse the membrane as a helical segment. The Na(+) site is built by Gly-94, Ala-96, Val-97, Asp-98, and Asn-101. Asp-98 contributes to the serotonin binding site. The Extracellular portion of the chain corresponds to 113–115 (GGG). Residues 116–135 (AFLLPYTIMAIFGGIPLFYM) traverse the membrane as a helical segment. The Cytoplasmic portion of the chain corresponds to 136 to 160 (ELALGQYHRNGCISIWRKICPIFKG). A Phosphotyrosine modification is found at Tyr-142. A helical transmembrane segment spans residues 161-186 (IGYAICIIAFYIASYYNTIIAWALYY). At 187–252 (LISSLTDRLP…KGLQDLGTIS (66 aa)) the chain is on the extracellular side. Cys-200 and Cys-209 are joined by a disulfide. N-linked (GlcNAc...) asparagine glycans are attached at residues Asn-208 and Asn-217. The chain crosses the membrane as a helical span at residues 253–271 (WQLTLCIVLIFTVIYFSIW). The Cytoplasmic segment spans residues 272-277 (KGVKTS). Phosphothreonine is present on Thr-276. A helical membrane pass occupies residues 278 to 297 (GKVVWVTATFPYIVLSVLLV). Residues 298 to 324 (RGATLPGAWRGVVFYLKPNWQKLLETG) lie on the Extracellular side of the membrane. The helical transmembrane segment at 325–347 (VWVDAAAQIFFSLGPGFGVLLAF) threads the bilayer. Ser-336 is a Na(+) binding site. Residues 348-360 (ASYNKFNNNCYQD) are Cytoplasmic-facing. A helical transmembrane segment spans residues 361–380 (ALVTSVVNCMTSFVSGFVIF). Residue Asn-368 participates in Na(+) binding. The Extracellular portion of the chain corresponds to 381 to 421 (TVLGYMAEMRNEDVSEVAKDAGPSLLFITYAEAIANMPAST). Residues 422–443 (FFAIIFFLMLITLGLDSTFAGL) form a helical membrane-spanning segment. Na(+) is bound by residues Leu-434, Asp-437, and Ser-438. Thr-439 provides a ligand contact to serotonin. The Cytoplasmic segment spans residues 444-463 (EGVITAVLDEFPHIWAKRRE). A helical transmembrane segment spans residues 464 to 483 (WFVLIVVITCVLGSLLTLTS). Topologically, residues 484–494 (GGAYVVTLLEE) are extracellular. Serotonin contacts are provided by Glu-494 and Tyr-495. A helical transmembrane segment spans residues 495–516 (YATGPAVLTVALIEAVAVSWFY). Residues 517 to 538 (GITQFCSDVKEMLGFSPGWFWR) lie on the Cytoplasmic side of the membrane. Residues 539–558 (ICWVAISPLFLLFIICSFLM) traverse the membrane as a helical segment. Phe-556 and Ser-559 together coordinate serotonin. Residues 559–574 (SPPQLRLFQYNYPHWS) lie on the Extracellular side of the membrane. A helical membrane pass occupies residues 575-595 (IVLGYCIGMSSVICIPTYIIY). Residues 596-630 (RLISTPGTLKERIIKSITPETPTEIPCGDIRMNAV) are Cytoplasmic-facing. The interval 616–624 (TPTEIPCGD) is interaction with RAB4A.

This sequence belongs to the sodium:neurotransmitter symporter (SNF) (TC 2.A.22) family. SLC6A4 subfamily. Monomer or homooligomer. Interacts with TGFB1I1. Interacts with SEC23A, SEC24C and PATJ. Interacts with NOS1; the interaction may diminish the cell surface localization of SERT in the brain and, correspondingly, reduce serotonin reuptake. Interacts (via C-terminus) with SCAMP2; the interaction is direct and retains transporter molecules intracellularly. Interacts with filamentous actin and STX1A. Interacts (via the N-terminus) with STX1A (via the H3 domain); this interaction regulates SLC4A6 channel conductance. Interacts with ITGAV:ITGB3. Interacts (via C-terminus) with ITGB3; this interaction regulates SLC6A4 trafficking. In terms of processing, phosphorylation at Thr-276 increases 5-HT uptake and is required for cGMP-mediated SERT regulation. In terms of tissue distribution, expressed in the intestinal crypt epithelial cells and myenteric neurons of the small intestine (at protein level). Expressed in the brain.

It localises to the cell membrane. The protein localises to the endomembrane system. Its subcellular location is the endosome membrane. It is found in the synapse. The protein resides in the cell junction. It localises to the focal adhesion. The protein localises to the cell projection. Its subcellular location is the neuron projection. The catalysed reaction is serotonin(out) + K(+)(in) + Na(+)(out) + H(+)(in) = serotonin(in) + K(+)(out) + Na(+)(in) + H(+)(out). Its function is as follows. Serotonin transporter that cotransports serotonin with one Na(+) ion in exchange for one K(+) ion and possibly one proton in an overall electroneutral transport cycle. Transports serotonin across the plasma membrane from the extracellular compartment to the cytosol thus limiting serotonin intercellular signaling. Essential for serotonin homeostasis in the central nervous system. In the developing somatosensory cortex, acts in glutamatergic neurons to control serotonin uptake and its trophic functions accounting for proper spatial organization of cortical neurons and elaboration of sensory circuits. In the mature cortex, acts primarily in brainstem raphe neurons to mediate serotonin uptake from the synaptic cleft back into the pre-synaptic terminal thus terminating serotonin signaling at the synapse. Modulates mucosal serotonin levels in the gastrointestinal tract through uptake and clearance of serotonin in enterocytes. Required for enteric neurogenesis and gastrointestinal reflexes. Regulates blood serotonin levels by ensuring rapid high affinity uptake of serotonin from plasma to platelets, where it is further stored in dense granules via vesicular monoamine transporters and then released upon stimulation. Mechanistically, the transport cycle starts with an outward-open conformation having Na1(+) and Cl(-) sites occupied. The binding of a second extracellular Na2(+) ion and serotonin substrate leads to structural changes to outward-occluded to inward-occluded to inward-open, where the Na2(+) ion and serotonin are released into the cytosol. Binding of intracellular K(+) ion induces conformational transitions to inward-occluded to outward-open and completes the cycle by releasing K(+) possibly together with a proton bound to Asp-98 into the extracellular compartment. Na1(+) and Cl(-) ions remain bound throughout the transport cycle. Additionally, displays serotonin-induced channel-like conductance for monovalent cations, mainly Na(+) ions. The channel activity is uncoupled from the transport cycle and may contribute to the membrane resting potential or excitability. In Rattus norvegicus (Rat), this protein is Sodium-dependent serotonin transporter (Slc6a4).